A 334-amino-acid polypeptide reads, in one-letter code: Protein-methionine-sulfoxide reductase catalytic subunit MsrP (334 aa).

Positions 1 to 44 (MKKIRPLTEADVTAESAFFMQRRQVLKALGISAAALSLPSTAQA) form a signal peptide, tat-type signal. Mo-molybdopterin-binding positions include Asn88, 91-92 (YE), Cys146, Thr181, Asn233, Arg238, and 249-251 (GIK).

It belongs to the MsrP family. As to quaternary structure, heterodimer of a catalytic subunit (MsrP) and a heme-binding subunit (MsrQ). It depends on Mo-molybdopterin as a cofactor. In terms of processing, predicted to be exported by the Tat system. The position of the signal peptide cleavage has not been experimentally proven.

It localises to the periplasm. The catalysed reaction is L-methionyl-[protein] + a quinone + H2O = L-methionyl-(S)-S-oxide-[protein] + a quinol. It carries out the reaction L-methionyl-[protein] + a quinone + H2O = L-methionyl-(R)-S-oxide-[protein] + a quinol. Its function is as follows. Part of the MsrPQ system that repairs oxidized periplasmic proteins containing methionine sulfoxide residues (Met-O), using respiratory chain electrons. Thus protects these proteins from oxidative-stress damage caused by reactive species of oxygen and chlorine generated by the host defense mechanisms. MsrPQ is essential for the maintenance of envelope integrity under bleach stress, rescuing a wide series of structurally unrelated periplasmic proteins from methionine oxidation, including the primary periplasmic chaperone SurA and the lipoprotein Pal. The catalytic subunit MsrP is non-stereospecific, being able to reduce both (R-) and (S-) diastereoisomers of methionine sulfoxide. The polypeptide is Protein-methionine-sulfoxide reductase catalytic subunit MsrP (Salmonella dublin (strain CT_02021853)).